The primary structure comprises 385 residues: Protein pelota homolog (385 aa).

This sequence belongs to the eukaryotic release factor 1 family. Pelota subfamily. As to quaternary structure, component of the Pelota-HBS1L complex, also named Dom34-Hbs1 complex, composed of PELO and HBS1L. It depends on a divalent metal cation as a cofactor.

Its subcellular location is the cytoplasm. Functionally, component of the Pelota-HBS1L complex, a complex that recognizes stalled ribosomes and triggers the No-Go Decay (NGD) pathway. In the Pelota-HBS1L complex, PELO recognizes ribosomes stalled at the 3' end of an mRNA and engages stalled ribosomes by destabilizing mRNA in the mRNA channel. Following mRNA extraction from stalled ribosomes by the SKI complex, the Pelota-HBS1L complex promotes recruitment of ABCE1, which drives the disassembly of stalled ribosomes, followed by degradation of damaged mRNAs as part of the NGD pathway. This Gallus gallus (Chicken) protein is Protein pelota homolog (PELO).